The sequence spans 138 residues: Large ribosomal subunit protein uL16 (138 aa).

Residues 1-22 are disordered; sequence MQQPARTKYRKQQKGRNKGIAT. A compositionally biased stretch (basic residues) spans 7–17; the sequence is TKYRKQQKGRN.

This sequence belongs to the universal ribosomal protein uL16 family. Part of the 50S ribosomal subunit.

In terms of biological role, binds 23S rRNA and is also seen to make contacts with the A and possibly P site tRNAs. This Nitrosospira multiformis (strain ATCC 25196 / NCIMB 11849 / C 71) protein is Large ribosomal subunit protein uL16.